The chain runs to 526 residues: Fumitremorgin C synthase (526 aa).

Residues 4–24 (LPLSPAVLFLTITLPILYFWI) form a helical membrane-spanning segment. Cys-443 lines the heme pocket.

It belongs to the cytochrome P450 family. Heme serves as cofactor.

It localises to the membrane. It carries out the reaction tryprostatin A + reduced [NADPH--hemoprotein reductase] + O2 = fumitremorgin C + oxidized [NADPH--hemoprotein reductase] + 2 H2O + H(+). Its pathway is mycotoxin biosynthesis. Its function is as follows. Cytochrome P450 monooxygenase; part of the gene cluster that mediates the biosynthesis of fumitremorgins, indole alkaloids that carry not only intriguing chemical structures, but also interesting biological and pharmacological activities. The biosynthesis of fumitremorgin-type alkaloids begins by condensation of the two amino acids L-tryptophan and L-proline to brevianamide F, catalyzed by the non-ribosomal peptide synthetase ftmPS/ftmA. Brevianamide F is then prenylated by the prenyltransferase ftmPT1/ftmB in the presence of dimethylallyl diphosphate, resulting in the formation of tryprostatin B. The three cytochrome P450 monooxygenases, ftmP450-1/ftmC, ftmP450-2/ftmE and ftmP450-3/FtmG, are responsible for the conversion of tryprostatin B to 6-hydroxytryprostatin B, tryprostatin A to fumitremorgin C and fumitremorgin C to 12,13-dihydroxyfumitremorgin C, respectively. The putative methyltransferase ftmMT/ftmD is expected for the conversion of 6-hydroxytryprostatin B to tryprostatin A. FtmPT2/FtmH catalyzes the prenylation of 12,13-dihydroxyfumitre-morgin C in the presence of dimethylallyl diphosphate, resulting in the formation of fumitremorgin B. Fumitremorgin B is further converted to verruculogen by ftmOx1/ftmF via the insertion of an endoperoxide bond between the two prenyl moieties. Finally, verruculogen is further converted to fumitremorgin A by the verruculogen prenyltransferase ftmPT3. The protein is Fumitremorgin C synthase of Neosartorya fischeri (strain ATCC 1020 / DSM 3700 / CBS 544.65 / FGSC A1164 / JCM 1740 / NRRL 181 / WB 181) (Aspergillus fischerianus).